The following is a 79-amino-acid chain: Exodeoxyribonuclease 7 small subunit (79 aa).

This sequence belongs to the XseB family. As to quaternary structure, heterooligomer composed of large and small subunits.

The protein localises to the cytoplasm. The catalysed reaction is Exonucleolytic cleavage in either 5'- to 3'- or 3'- to 5'-direction to yield nucleoside 5'-phosphates.. Functionally, bidirectionally degrades single-stranded DNA into large acid-insoluble oligonucleotides, which are then degraded further into small acid-soluble oligonucleotides. This chain is Exodeoxyribonuclease 7 small subunit, found in Geobacillus kaustophilus (strain HTA426).